Consider the following 245-residue polypeptide: Heavy metal-associated isoprenylated plant protein 1 (245 aa).

In terms of domain architecture, HMA 1 spans 28–92; it reads PVHVVLKIDF…KLQKKSKKKV (65 aa). Residues Cys39 and Cys42 each contribute to the a metal cation site. The interval 91–113 is disordered; sequence KVELISPKPKKDTKENNEKKAND. A compositionally biased stretch (basic and acidic residues) spans 99–113; it reads PKKDTKENNEKKAND. Residues 121–188 form the HMA 2 domain; it reads VTTVVLKVNC…KLKKTVQVVP (68 aa). Residues Cys132 and Cys135 each contribute to the a metal cation site. The residue at position 242 (Cys242) is a Cysteine methyl ester. Residue Cys242 is the site of S-farnesyl cysteine attachment. A propeptide spans 243 to 245 (removed in mature form); the sequence is SVM.

The protein belongs to the HIPP family.

Its function is as follows. Heavy-metal-binding protein. The polypeptide is Heavy metal-associated isoprenylated plant protein 1 (Arabidopsis thaliana (Mouse-ear cress)).